Consider the following 144-residue polypeptide: Glutaredoxin-C6 (144 aa).

Residues 39–143 (EAKIRRLISE…PKLVQVGALW (105 aa)) enclose the Glutaredoxin domain. Cys59 and Cys62 are joined by a disulfide.

This sequence belongs to the glutaredoxin family. CC-type subfamily.

It is found in the cytoplasm. In terms of biological role, has a glutathione-disulfide oxidoreductase activity in the presence of NADPH and glutathione reductase. Reduces low molecular weight disulfides and proteins. The chain is Glutaredoxin-C6 (GRXC6) from Arabidopsis thaliana (Mouse-ear cress).